We begin with the raw amino-acid sequence, 422 residues long: Glycine amidinotransferase, mitochondrial (422 aa).

Residues aspartate 253 and histidine 302 contribute to the active site. Cysteine 406 serves as the catalytic Amidino-cysteine intermediate.

Belongs to the amidinotransferase family. In terms of assembly, homodimer. As to expression, strongly expressed in neurons and glia of the brain, the lamina propria, submucosa and serosa of the small intestine, in oocytes and on the fringes of the pancreas. Not expressed in the retina, eye lens, heart or bulbus arteriosus. Expressed in the yolk syncytial layer in gastrula stage embryos, in the yolk syncytial layer and mature somites in early segmentation embryos and in the yolk syncytial layer and the liver of long-pec stage (48 hours post-fertilization) embryos.

It is found in the mitochondrion inner membrane. It carries out the reaction L-arginine + glycine = guanidinoacetate + L-ornithine. It functions in the pathway amine and polyamine biosynthesis; creatine biosynthesis; creatine from L-arginine and glycine: step 1/2. In terms of biological role, catalyzes the biosynthesis of guanidinoacetate, the immediate precursor of creatine. Creatine plays a vital role in energy metabolism in muscle tissues. May play a role in embryonic and central nervous system development. This Danio rerio (Zebrafish) protein is Glycine amidinotransferase, mitochondrial.